A 441-amino-acid chain; its full sequence is Probable cyclic di-GMP phosphodiesterase VC_1348 (441 aa).

The region spanning 72–187 (TILIVDDSPD…LLKSRVHTHL (116 aa)) is the Response regulatory domain. Position 120 is a 4-aspartylphosphate (Asp-120). An HD-GYP domain is found at 214–425 (LDRMQDAVVF…FIDIAQKFAD (212 aa)).

The enzyme catalyses 3',3'-c-di-GMP + 2 H2O = 2 GMP + 2 H(+). Functionally, probable phosphodiesterase (PDE) that catalyzes the hydrolysis of cyclic diguanylate (c-di-GMP). Increases motility and decreases biofilm formation in vivo. This chain is Probable cyclic di-GMP phosphodiesterase VC_1348, found in Vibrio cholerae serotype O1 (strain ATCC 39315 / El Tor Inaba N16961).